Reading from the N-terminus, the 306-residue chain is Pseudouridine-5'-phosphate glycosidase (306 aa).

The active-site Proton donor is the E28. 2 residues coordinate substrate: K89 and V109. Residue D139 participates in Mn(2+) binding. Residue 141–143 (SAD) participates in substrate binding. K160 functions as the Nucleophile in the catalytic mechanism.

It belongs to the pseudouridine-5'-phosphate glycosidase family. In terms of assembly, homotrimer. The cofactor is Mn(2+).

It catalyses the reaction D-ribose 5-phosphate + uracil = psi-UMP + H2O. Its function is as follows. Catalyzes the reversible cleavage of pseudouridine 5'-phosphate (PsiMP) to ribose 5-phosphate and uracil. Functions biologically in the cleavage direction, as part of a pseudouridine degradation pathway. The polypeptide is Pseudouridine-5'-phosphate glycosidase (Gemmatimonas aurantiaca (strain DSM 14586 / JCM 11422 / NBRC 100505 / T-27)).